Reading from the N-terminus, the 484-residue chain is Iroquois-class homeodomain protein IRX-5 (484 aa).

Positions 112–174 (DPAYRKNATR…NARRRLKKEN (63 aa)) form a DNA-binding region, homeobox; TALE-type. 2 disordered regions span residues 176–393 (MTWT…QCPF) and 424–443 (GHPG…FNGL). A compositionally biased stretch (acidic residues) spans 185-202 (EDEEEEENIDLEKNDEDE). Basic and acidic residues-rich tracts occupy residues 203-212 (PQKPEDKGDL) and 249-265 (SDFK…ELPR). Ser-273 bears the Phosphoserine mark. The span at 318–328 (SPPPPPPPPPA) shows a compositional bias: pro residues. The span at 375 to 389 (SRASPAPAPARSPSA) shows a compositional bias: low complexity. At Ser-465 the chain carries Phosphoserine.

It belongs to the TALE/IRO homeobox family. As to expression, not expressed in the developing metanephric kidney or adult kidney.

It is found in the nucleus. Functionally, establishes the cardiac repolarization gradient by its repressive actions on the KCND2 potassium-channel gene. Required for retinal cone bipolar cell differentiation. May regulate contrast adaptation in the retina and control specific aspects of visual function in circuits of the mammalian retina. Involved in craniofacial and gonadal development. Modulates the migration of progenitor cell populations in branchial arches and gonads by repressing CXCL12. The protein is Iroquois-class homeodomain protein IRX-5 (Irx5) of Mus musculus (Mouse).